The primary structure comprises 253 residues: 5'-nucleotidase SurE (253 aa).

Aspartate 8, aspartate 9, serine 40, and asparagine 93 together coordinate a divalent metal cation.

This sequence belongs to the SurE nucleotidase family. It depends on a divalent metal cation as a cofactor.

It is found in the cytoplasm. It carries out the reaction a ribonucleoside 5'-phosphate + H2O = a ribonucleoside + phosphate. Functionally, nucleotidase that shows phosphatase activity on nucleoside 5'-monophosphates. This is 5'-nucleotidase SurE from Methylobacterium sp. (strain 4-46).